The primary structure comprises 688 residues: Collagen alpha-2(IX) chain (688 aa).

The first 22 residues, 1–22 (MTAVPAPRSLFVLLQVLWLALA), serve as a signal peptide directing secretion. The segment at 26–162 (GPPGEPGPPG…PGKPGRPGTI (137 aa)) is triple-helical region 4 (COL4). The tract at residues 26–171 (GPPGEPGPPG…IQGLEGSADF (146 aa)) is disordered. Composition is skewed to pro residues over residues 28–42 (PGEPGPPGPPGPPGV) and 105–126 (LPGPPGLPGPGFAGPPGPPGPV). Residues 128–137 (LPGEIGTPGP) show a composition bias toward low complexity. The span at 138 to 156 (KGDPGPEGPSGPPGPPGKP) shows a compositional bias: pro residues. Pro-159 is subject to 4-hydroxyproline. The nonhelical region 4 (NC4) stretch occupies residues 163–179 (QGLEGSADFLCPTNCPA). Ser-168 carries O-linked (Xyl...) (glycosaminoglycan) serine glycosylation. The tract at residues 180-518 (GVKGPQGLQG…PGRQGVVGRA (339 aa)) is triple-helical region 3 (COL3). Residue Lys-182 is modified to 5-hydroxylysine. O-linked (Gal...) hydroxylysine glycosylation occurs at Lys-182. Positions 183 to 517 (GPQGLQGVKG…QPGRQGVVGR (335 aa)) are disordered. Composition is skewed to low complexity over residues 289–314 (PQGITGPKGITGPPGIDGKDGTPGIP) and 392–412 (RGPVGQPGPQGRQGPKGEQGP). Over residues 435–444 (GPRGGVGDPG) the composition is skewed to gly residues. The segment covering 502 to 517 (DRGVPGQPGRQGVVGR) has biased composition (low complexity). A nonhelical region 3 (NC3) region spans residues 519 to 548 (ASDQHIVDVVLKMIQEQLAEVAVSAKREAL). Positions 549–631 (GAAGMVGLPG…PGLPGRPGQA (83 aa)) are triple-helical region 2 (COL2). The interval 553–664 (MVGLPGPPGP…GPVGLPGFCE (112 aa)) is disordered. The segment covering 598 to 610 (KRGEKGDRGEMGH) has biased composition (basic and acidic residues). A nonhelical region 2 (NC2) region spans residues 632–633 (IN). A triple-helical region 1 (COL1) region spans residues 634–663 (GKDGDRGSPGAPGEAGRPGRPGPVGLPGFC). Positions 664-688 (EPAACLGASAYTSARLTEPGSIKGP) are nonhelical region 1 (NC1).

The protein belongs to the fibril-associated collagens with interrupted helices (FACIT) family. As to quaternary structure, heterotrimer of an alpha 1(IX), an alpha 2(IX) and an alpha 3(IX) chain. The chains are linked to each other by interchain disulfide bonds. Trimers are also cross-linked via hydroxylysines. Covalently linked to the telopeptides of type II collagen by lysine-derived cross-links. Post-translationally, prolines at the third position of the tripeptide repeating unit (G-X-Y) are hydroxylated in some or all of the chains.

The protein resides in the secreted. It is found in the extracellular space. The protein localises to the extracellular matrix. In terms of biological role, structural component of hyaline cartilage and vitreous of the eye. The chain is Collagen alpha-2(IX) chain (Col9a2) from Mus musculus (Mouse).